We begin with the raw amino-acid sequence, 155 residues long: Cathelicidin-1 (155 aa).

The first 29 residues, 1-29, serve as a signal peptide directing secretion; sequence METPRASLSLGRWSLWLLLLGLALPSASA. Position 30 is a pyrrolidone carboxylic acid (Q30). Residues 30–143 constitute a propeptide that is removed on maturation; that stretch reads QALSYREAVL…KQPWAPPQAA (114 aa). Disulfide bonds link C85-C96, C107-C124, and C146-C154.

The protein belongs to the cathelicidin family. As to expression, large granules of neutrophils.

The protein localises to the secreted. In terms of biological role, potent microbicidal activity; active against S.aureus and E.coli. In Bos taurus (Bovine), this protein is Cathelicidin-1 (CATHL1).